The following is a 124-amino-acid chain: Large ribosomal subunit protein bL21 (124 aa).

The segment at 105-124 is disordered; it reads TVKAEPKSKRAPAPEAAADA. A compositionally biased stretch (low complexity) spans 115–124; that stretch reads APAPEAAADA.

This sequence belongs to the bacterial ribosomal protein bL21 family. As to quaternary structure, part of the 50S ribosomal subunit. Contacts protein L20.

In terms of biological role, this protein binds to 23S rRNA in the presence of protein L20. The chain is Large ribosomal subunit protein bL21 from Xanthobacter autotrophicus (strain ATCC BAA-1158 / Py2).